Here is a 149-residue protein sequence, read N- to C-terminus: Nucleoside diphosphate kinase 1 (149 aa).

The ATP site is built by Lys9, Phe57, Arg85, Thr91, Arg102, and Asn112. Catalysis depends on His115, which acts as the Pros-phosphohistidine intermediate.

This sequence belongs to the NDK family. Homohexamer. Mg(2+) is required as a cofactor.

It carries out the reaction a 2'-deoxyribonucleoside 5'-diphosphate + ATP = a 2'-deoxyribonucleoside 5'-triphosphate + ADP. It catalyses the reaction a ribonucleoside 5'-diphosphate + ATP = a ribonucleoside 5'-triphosphate + ADP. Functionally, major role in the synthesis of nucleoside triphosphates other than ATP. The ATP gamma phosphate is transferred to the NDP beta phosphate via a ping-pong mechanism, using a phosphorylated active-site intermediate. This NDK is microtubule-associated. The protein is Nucleoside diphosphate kinase 1 (NDKR) of Oryza sativa subsp. japonica (Rice).